The sequence spans 406 residues: Peptide transporter imqD (406 aa).

The segment at 1–25 is disordered; that stretch reads MTAPADSTEKSETSETTTLQTTEVS. Residues 14–25 show a composition bias toward low complexity; it reads SETTTLQTTEVS. 6 helical membrane-spanning segments follow: residues 184 to 204, 220 to 240, 262 to 282, 309 to 329, 344 to 364, and 373 to 393; these read GLVA…LSQA, IPND…GPVI, ATGF…QKII, VFLQ…SFVT, AVVQ…GIAI, and LIWM…VFWI.

Belongs to the major facilitator superfamily. Proton-dependent oligopeptide transporter (POT/PTR) (TC 2.A.17) family.

The protein resides in the membrane. In terms of biological role, peptide transporter; part of the gene cluster that mediates the biosynthesis of imizoquins A to D, tripeptide-derived alkaloids that serve a protective role against oxidative stress that are essential for normal germination. The protein is Peptide transporter imqD of Aspergillus flavus (strain ATCC 200026 / FGSC A1120 / IAM 13836 / NRRL 3357 / JCM 12722 / SRRC 167).